Reading from the N-terminus, the 149-residue chain is uncharacterized protein (149 aa).

2 consecutive transmembrane segments (helical) span residues 91 to 111 (IFIL…LFHY) and 122 to 142 (ISIL…ICLL).

It localises to the membrane. This is an uncharacterized protein from Dictyostelium discoideum (Social amoeba).